The sequence spans 343 residues: tRNA-splicing endonuclease (343 aa).

Catalysis depends on residues Tyr-277, His-288, and Lys-319.

The protein belongs to the tRNA-intron endonuclease family. Archaeal long subfamily. Homodimer.

It carries out the reaction pretRNA = a 3'-half-tRNA molecule with a 5'-OH end + a 5'-half-tRNA molecule with a 2',3'-cyclic phosphate end + an intron with a 2',3'-cyclic phosphate and a 5'-hydroxyl terminus.. Functionally, endonuclease that removes tRNA introns. Cleaves pre-tRNA at the 5' and 3' splice sites to release the intron. The products are an intron and two tRNA half-molecules bearing 2',3' cyclic phosphate and 5'-OH termini. Recognizes a pseudosymmetric substrate in which 2 bulged loops of 3 bases are separated by a stem of 4 bp. This chain is tRNA-splicing endonuclease, found in Halobacterium salinarum (strain ATCC 29341 / DSM 671 / R1).